Consider the following 313-residue polypeptide: Porphobilinogen deaminase (313 aa).

Cys242 is subject to S-(dipyrrolylmethanemethyl)cysteine.

It belongs to the HMBS family. Monomer. The cofactor is dipyrromethane.

The catalysed reaction is 4 porphobilinogen + H2O = hydroxymethylbilane + 4 NH4(+). It participates in porphyrin-containing compound metabolism; protoporphyrin-IX biosynthesis; coproporphyrinogen-III from 5-aminolevulinate: step 2/4. Tetrapolymerization of the monopyrrole PBG into the hydroxymethylbilane pre-uroporphyrinogen in several discrete steps. This is Porphobilinogen deaminase from Salmonella dublin (strain CT_02021853).